We begin with the raw amino-acid sequence, 221 residues long: UPF0758 protein Ent638_0101 (221 aa).

One can recognise an MPN domain in the interval 99-221; it reads PLLSPEMTKD…YVSFAEQGWI (123 aa). His170, His172, and Asp183 together coordinate Zn(2+). The JAMM motif signature appears at 170 to 183; it reads HNHPSGCAEPSKAD.

This sequence belongs to the UPF0758 family. YicR subfamily.

The protein is UPF0758 protein Ent638_0101 of Enterobacter sp. (strain 638).